We begin with the raw amino-acid sequence, 285 residues long: Probable endonuclease 4 (285 aa).

His67, His107, Glu144, Asp178, His181, His215, Asp228, His230, and Glu260 together coordinate Zn(2+).

Belongs to the AP endonuclease 2 family. The cofactor is Zn(2+).

The enzyme catalyses Endonucleolytic cleavage to 5'-phosphooligonucleotide end-products.. In terms of biological role, endonuclease IV plays a role in DNA repair. It cleaves phosphodiester bonds at apurinic or apyrimidinic (AP) sites, generating a 3'-hydroxyl group and a 5'-terminal sugar phosphate. In Chloroflexus aurantiacus (strain ATCC 29366 / DSM 635 / J-10-fl), this protein is Probable endonuclease 4.